The sequence spans 508 residues: Glucose-1-phosphate adenylyltransferase small subunit 1, chloroplastic (508 aa).

A disordered region spans residues 1–27 (MSSIVTSGVINVPRSSSSSKNLSFSSS). Residues 1-59 (MSSIVTSGVINVPRSSSSSKNLSFSSSSQLSGNKILTVSGNGAPRGRCTLKHVFLTPKA) constitute a chloroplast transit peptide. Positions 15–27 (SSSSSKNLSFSSS) are enriched in low complexity.

Belongs to the bacterial/plant glucose-1-phosphate adenylyltransferase family. Heterotetramer. In terms of tissue distribution, seeds.

It is found in the plastid. It localises to the chloroplast. The catalysed reaction is alpha-D-glucose 1-phosphate + ATP + H(+) = ADP-alpha-D-glucose + diphosphate. It participates in glycan biosynthesis; starch biosynthesis. Activated by 3'phosphoglycerate, inhibited by orthophosphate. Allosteric regulation. In terms of biological role, this protein plays a role in synthesis of starch. It catalyzes the synthesis of the activated glycosyl donor, ADP-glucose from Glc-1-P and ATP. The sequence is that of Glucose-1-phosphate adenylyltransferase small subunit 1, chloroplastic (AGPC) from Vicia faba (Broad bean).